We begin with the raw amino-acid sequence, 479 residues long: Anaerobic nitric oxide reductase flavorubredoxin (479 aa).

Positions 30-210 (LRGSSYNSYL…PFSRLVTPKI (181 aa)) are zinc metallo-hydrolase. Fe cation is bound by residues H79, E81, D83, H147, D166, and H227. One can recognise a Flavodoxin-like domain in the interval 254 to 393 (ITIFYDTMSN…LCREHGREIA (140 aa)). FMN-binding positions include 260 to 264 (TMSNN) and 342 to 369 (AFGSHGWSGGAVDRLSTRLQDAGFEMSL). Residues 423-474 (GPRMQCSVCQWIYDPAKGEPMQDVAPGTPWSEVPDNFLCPECSLGKDVFDEL) form the Rubredoxin-like domain. Fe cation-binding residues include C428, C431, C461, and C464.

In the N-terminal section; belongs to the zinc metallo-hydrolase group 3 family. As to quaternary structure, homotetramer. Fe cation is required as a cofactor. The cofactor is FMN.

The protein localises to the cytoplasm. Its pathway is nitrogen metabolism; nitric oxide reduction. In terms of biological role, anaerobic nitric oxide reductase; uses NADH to detoxify nitric oxide (NO), protecting several 4Fe-4S NO-sensitive enzymes. Has at least 2 reductase partners, only one of which (NorW, flavorubredoxin reductase) has been identified. NO probably binds to the di-iron center; electrons enter from the NorW at rubredoxin and are transferred sequentially to the FMN center and the di-iron center. Also able to function as an aerobic oxygen reductase. This chain is Anaerobic nitric oxide reductase flavorubredoxin, found in Shigella sonnei (strain Ss046).